Here is a 550-residue protein sequence, read N- to C-terminus: Membrane-bound alkaline phosphatase (550 aa).

Residues 1–39 form the signal peptide; that stretch reads MSTWWLVVVAAAAAAGLVRAEDRYHPERLAAGEASAATR. Asp83 serves as a coordination point for Mg(2+). A Zn(2+)-binding site is contributed by Asp83. Ser133 (phosphoserine intermediate) is an active-site residue. 3 residues coordinate Mg(2+): His196, Ser198, and Glu356. Positions 361, 365, 402, 403, and 479 each coordinate Zn(2+). Ser524 carries the GPI-anchor amidated serine lipid modification. Positions 525–550 are cleaved as a propeptide — removed in mature form; the sequence is AATVPTAALLSLLLAAFITLRHQCFL.

This sequence belongs to the alkaline phosphatase family. Mg(2+) serves as cofactor. It depends on Zn(2+) as a cofactor. Midgut.

The protein resides in the cell membrane. It carries out the reaction a phosphate monoester + H2O = an alcohol + phosphate. The polypeptide is Membrane-bound alkaline phosphatase (Alp-m) (Bombyx mori (Silk moth)).